A 489-amino-acid polypeptide reads, in one-letter code: Para-nitrobenzyl esterase (489 aa).

Residue Ser189 is the Acyl-ester intermediate of the active site. Ser189 carries the phosphoserine modification. Active-site charge relay system residues include Glu310 and His399.

It belongs to the type-B carboxylesterase/lipase family. As to quaternary structure, monomer.

Functionally, catalyzes hydrolysis of several beta-lactam antibiotic PNB esters to the corresponding free acid and PNB alcohol. The chain is Para-nitrobenzyl esterase (pnbA) from Bacillus subtilis (strain 168).